A 284-amino-acid chain; its full sequence is uncharacterized protein (284 aa).

An N-terminal signal peptide occupies residues 1–23; it reads MKRGCAIAVMICGLITSVSAASA.

It belongs to the surface antigen msp4 family.

This is an uncharacterized protein from Brucella suis biovar 1 (strain 1330).